A 256-amino-acid polypeptide reads, in one-letter code: Thiazole synthase (256 aa).

The active-site Schiff-base intermediate with DXP is the lysine 95. Residues glycine 156, 183–184 (AG), and 205–206 (NT) contribute to the 1-deoxy-D-xylulose 5-phosphate site.

It belongs to the ThiG family. As to quaternary structure, homotetramer. Forms heterodimers with either ThiH or ThiS.

It is found in the cytoplasm. It catalyses the reaction [ThiS sulfur-carrier protein]-C-terminal-Gly-aminoethanethioate + 2-iminoacetate + 1-deoxy-D-xylulose 5-phosphate = [ThiS sulfur-carrier protein]-C-terminal Gly-Gly + 2-[(2R,5Z)-2-carboxy-4-methylthiazol-5(2H)-ylidene]ethyl phosphate + 2 H2O + H(+). The protein operates within cofactor biosynthesis; thiamine diphosphate biosynthesis. Its function is as follows. Catalyzes the rearrangement of 1-deoxy-D-xylulose 5-phosphate (DXP) to produce the thiazole phosphate moiety of thiamine. Sulfur is provided by the thiocarboxylate moiety of the carrier protein ThiS. In vitro, sulfur can be provided by H(2)S. This Gluconacetobacter diazotrophicus (strain ATCC 49037 / DSM 5601 / CCUG 37298 / CIP 103539 / LMG 7603 / PAl5) protein is Thiazole synthase.